Here is a 394-residue protein sequence, read N- to C-terminus: Elongation factor Tu 2 (394 aa).

The region spanning 10-204 (KPHVNVGTIG…ALDTYIPEPA (195 aa)) is the tr-type G domain. The segment at 19-26 (GHVDHGKT) is G1. 19–26 (GHVDHGKT) provides a ligand contact to GTP. Threonine 26 serves as a coordination point for Mg(2+). Positions 60-64 (GITIN) are G2. Positions 81 to 84 (DCPG) are G3. Residues 81-85 (DCPGH) and 136-139 (NKCD) contribute to the GTP site. The tract at residues 136–139 (NKCD) is G4. The interval 174–176 (SAL) is G5.

Belongs to the TRAFAC class translation factor GTPase superfamily. Classic translation factor GTPase family. EF-Tu/EF-1A subfamily. As to quaternary structure, monomer.

It is found in the cytoplasm. The enzyme catalyses GTP + H2O = GDP + phosphate + H(+). In terms of biological role, GTP hydrolase that promotes the GTP-dependent binding of aminoacyl-tRNA to the A-site of ribosomes during protein biosynthesis. The chain is Elongation factor Tu 2 from Shewanella frigidimarina (strain NCIMB 400).